We begin with the raw amino-acid sequence, 474 residues long: MNTATSTAYSYKVVRQFAIMTVVWGIVGMGLGVFIAAQLAWPFLNFDLPWTSFGRLRPLHTNAVIFAFGGCALFATSYYSVQRTCQTTLFAPKLAAFTFWGWQLVILLAAISLPLGFTSSKEYAELEWPIDILITIVWVAYAVVFFGTLAKRKVKHIYVGNWFFGAFILTVAILHVVNNLEIPVTAMKSYSLYAGATDAMVQWWYGHNAVGFFLTAGFLGIMYYFVPKQAERPVYSYRLSIVHFWALITVYIWAGPHHLHYTALPDWAQSLGMVMSLILLAPSWGGMINGMMTLSGAWHKLRSDPILRFLVVSLAFYGMSTFEGPMMAIKTVNALSHYTDWTIGHVHAGALGWVAMVSIGALYHLVPKVFGREQMHSIGLINTHFWLATIGTVLYIASMWVNGIAQGLMWRAINDDGTLTYSFVESLEASHPGFVVRMIGGAIFFAGMLVMAYNTWRTVQAAKPAEYDAAAQIA.

The Cytoplasmic segment spans residues 1-16; that stretch reads MNTATSTAYSYKVVRQ. The helical transmembrane segment at 17–37 threads the bilayer; that stretch reads FAIMTVVWGIVGMGLGVFIAA. Residues 38 to 60 are Periplasmic-facing; that stretch reads QLAWPFLNFDLPWTSFGRLRPLH. Heme b is bound at residue histidine 60. Residues 61 to 81 traverse the membrane as a helical segment; sequence TNAVIFAFGGCALFATSYYSV. Residues 82–96 are Cytoplasmic-facing; that stretch reads QRTCQTTLFAPKLAA. A helical transmembrane segment spans residues 97–117; that stretch reads FTFWGWQLVILLAAISLPLGF. Residues 118–129 lie on the Periplasmic side of the membrane; sequence TSSKEYAELEWP. A helical membrane pass occupies residues 130–150; sequence IDILITIVWVAYAVVFFGTLA. Topologically, residues 151–156 are cytoplasmic; that stretch reads KRKVKH. Residues 157–177 form a helical membrane-spanning segment; it reads IYVGNWFFGAFILTVAILHVV. At 178-205 the chain is on the periplasmic side; the sequence is NNLEIPVTAMKSYSLYAGATDAMVQWWY. Residues 206 to 226 traverse the membrane as a helical segment; the sequence is GHNAVGFFLTAGFLGIMYYFV. Histidine 207 lines the Cu cation pocket. The Cytoplasmic segment spans residues 227 to 238; sequence PKQAERPVYSYR. The chain crosses the membrane as a helical span at residues 239–259; that stretch reads LSIVHFWALITVYIWAGPHHL. Cu cation is bound by residues histidine 257 and histidine 258. At 260–270 the chain is on the periplasmic side; it reads HYTALPDWAQS. The helical transmembrane segment at 271–291 threads the bilayer; it reads LGMVMSLILLAPSWGGMINGM. The Cytoplasmic segment spans residues 292–308; sequence MTLSGAWHKLRSDPILR. The helical transmembrane segment at 309-329 threads the bilayer; the sequence is FLVVSLAFYGMSTFEGPMMAI. Residues 330–345 are Periplasmic-facing; that stretch reads KTVNALSHYTDWTIGH. Heme b is bound by residues histidine 345 and histidine 347. A helical membrane pass occupies residues 346 to 366; sequence VHAGALGWVAMVSIGALYHLV. At 367–384 the chain is on the cytoplasmic side; the sequence is PKVFGREQMHSIGLINTH. A helical membrane pass occupies residues 385 to 405; the sequence is FWLATIGTVLYIASMWVNGIA. Residues 406–432 lie on the Periplasmic side of the membrane; it reads QGLMWRAINDDGTLTYSFVESLEASHP. A helical transmembrane segment spans residues 433 to 453; the sequence is GFVVRMIGGAIFFAGMLVMAY. Over 454–474 the chain is Cytoplasmic; that stretch reads NTWRTVQAAKPAEYDAAAQIA.

This sequence belongs to the heme-copper respiratory oxidase family. Component of the cbb3-type cytochrome c oxidase at least composed of CcoN, CcoO, CcoQ and CcoP. Cu(2+) is required as a cofactor. It depends on heme b as a cofactor.

It localises to the cell inner membrane. The catalysed reaction is 4 Fe(II)-[cytochrome c] + O2 + 8 H(+)(in) = 4 Fe(III)-[cytochrome c] + 2 H2O + 4 H(+)(out). Its pathway is energy metabolism; oxidative phosphorylation. Cbb3-type cytochrome c oxidase is the component of the respiratory chain that catalyzes the reduction of oxygen to water. Subunits CcoN and CcoO form the functional core of the enzyme complex. Subunits CcoP and CcoQ may optionally bind to the core. CcoN is the catalytic subunit of the enzyme. Electrons originating in cytochrome c or a quinol are transferred to the bimetallic center formed by a high-spin heme and copper B. The complex also functions as a proton pump. This is Cbb3-type cytochrome c oxidase subunit CcoN1 from Stutzerimonas stutzeri (Pseudomonas stutzeri).